Here is a 342-residue protein sequence, read N- to C-terminus: Holliday junction branch migration complex subunit RuvB (342 aa).

The tract at residues 1 to 179 (MTNILSPEKS…FGIPMRLNFY (179 aa)) is large ATPase domain (RuvB-L). ATP is bound by residues Ile-18, Arg-19, Gly-60, Lys-63, Thr-64, Thr-65, 126–128 (EDF), Arg-169, Tyr-179, and Arg-216. Thr-64 serves as a coordination point for Mg(2+). The interval 180–250 (NTGELKKVLN…ISDFGLNRLE (71 aa)) is small ATPAse domain (RuvB-S). The head domain (RuvB-H) stretch occupies residues 253 to 342 (RIGLDSNDYR…HQFNIFNENE (90 aa)). The DNA site is built by Arg-289, Arg-308, and Arg-313.

The protein belongs to the RuvB family. In terms of assembly, homohexamer. Forms an RuvA(8)-RuvB(12)-Holliday junction (HJ) complex. HJ DNA is sandwiched between 2 RuvA tetramers; dsDNA enters through RuvA and exits via RuvB. An RuvB hexamer assembles on each DNA strand where it exits the tetramer. Each RuvB hexamer is contacted by two RuvA subunits (via domain III) on 2 adjacent RuvB subunits; this complex drives branch migration. In the full resolvosome a probable DNA-RuvA(4)-RuvB(12)-RuvC(2) complex forms which resolves the HJ.

Its subcellular location is the cytoplasm. It catalyses the reaction ATP + H2O = ADP + phosphate + H(+). The RuvA-RuvB-RuvC complex processes Holliday junction (HJ) DNA during genetic recombination and DNA repair, while the RuvA-RuvB complex plays an important role in the rescue of blocked DNA replication forks via replication fork reversal (RFR). RuvA specifically binds to HJ cruciform DNA, conferring on it an open structure. The RuvB hexamer acts as an ATP-dependent pump, pulling dsDNA into and through the RuvAB complex. RuvB forms 2 homohexamers on either side of HJ DNA bound by 1 or 2 RuvA tetramers; 4 subunits per hexamer contact DNA at a time. Coordinated motions by a converter formed by DNA-disengaged RuvB subunits stimulates ATP hydrolysis and nucleotide exchange. Immobilization of the converter enables RuvB to convert the ATP-contained energy into a lever motion, pulling 2 nucleotides of DNA out of the RuvA tetramer per ATP hydrolyzed, thus driving DNA branch migration. The RuvB motors rotate together with the DNA substrate, which together with the progressing nucleotide cycle form the mechanistic basis for DNA recombination by continuous HJ branch migration. Branch migration allows RuvC to scan DNA until it finds its consensus sequence, where it cleaves and resolves cruciform DNA. The protein is Holliday junction branch migration complex subunit RuvB of Rickettsia conorii (strain ATCC VR-613 / Malish 7).